Reading from the N-terminus, the 698-residue chain is Protein let-99 (698 aa).

The DEP domain occupies 23-107 (FRSNLSLKTN…SESRIYLFMK (85 aa)). 2 disordered regions span residues 115–188 (PKPR…DDEI) and 653–672 (ITRS…QASP). Positions 146-157 (RPPKARLPRRLS) are enriched in basic residues. Positions 178-188 (HGFDDHKDDEI) are enriched in basic and acidic residues.

It localises to the cytoplasm. The protein localises to the cell cortex. Functionally, required for the proper orientation of spindles after the establishment of polarity. May play a role in interactions between the astral microtubules and the cortical cytoskeleton. Required for asymmetric forces on nuclei and spindles. Acts downstream of the PAR signaling as an intermediate that transduces polarity information to the machinery that positions the mitotic spindle, possibly by regulating force generation. Regulates gpr-1/2 asymmetric cortical localization during the first embryonic cell divisions. Acts antagonistically to the gpr-1/2 signaling pathway. Regulates mes-1 expression and/or localization pattern during early embryogenesis. This chain is Protein let-99 (let-99), found in Caenorhabditis elegans.